Here is a 374-residue protein sequence, read N- to C-terminus: Alanine racemase (374 aa).

Catalysis depends on K44, which acts as the Proton acceptor; specific for D-alanine. At K44 the chain carries N6-(pyridoxal phosphate)lysine. R139 contributes to the substrate binding site. The active-site Proton acceptor; specific for L-alanine is the Y269. M317 contributes to the substrate binding site.

The protein belongs to the alanine racemase family. Pyridoxal 5'-phosphate is required as a cofactor.

It catalyses the reaction L-alanine = D-alanine. Its pathway is amino-acid biosynthesis; D-alanine biosynthesis; D-alanine from L-alanine: step 1/1. In terms of biological role, catalyzes the interconversion of L-alanine and D-alanine. May also act on other amino acids. In Bordetella avium (strain 197N), this protein is Alanine racemase (alr).